Reading from the N-terminus, the 457-residue chain is Fibrinogen C domain-containing protein 1-B (457 aa).

Positions methionine 1 to glutamate 21 are disordered. Over methionine 1–cysteine 33 the chain is Cytoplasmic. A helical; Signal-anchor for type II membrane protein membrane pass occupies residues threonine 34–methionine 54. Over asparagine 55–asparagine 457 the chain is Extracellular. Positions cysteine 231–arginine 454 constitute a Fibrinogen C-terminal domain. Residue asparagine 233 is glycosylated (N-linked (GlcNAc...) asparagine). Residues cysteine 240 and cysteine 269 are joined by a disulfide bond. Asparagine 336 carries an N-linked (GlcNAc...) asparagine glycan. Aspartate 389 and aspartate 391 together coordinate Ca(2+). Cysteine 397 and cysteine 410 are disulfide-bonded.

In terms of assembly, homotetramer; disulfide-linked.

It localises to the membrane. Functionally, acetyl group-binding receptor which shows a calcium-dependent binding to acetylated structures such as chitin, some N-acetylated carbohydrates, and amino acids. This Xenopus laevis (African clawed frog) protein is Fibrinogen C domain-containing protein 1-B (fibcd1-b).